We begin with the raw amino-acid sequence, 221 residues long: ATP-dependent dethiobiotin synthetase BioD (221 aa).

11-16 (GVGKTY) serves as a coordination point for ATP. T15 is a binding site for Mg(2+). K36 is an active-site residue. T40 is a binding site for substrate. ATP-binding positions include D48 and 107-110 (EGAG). Residues D48 and E107 each coordinate Mg(2+).

The protein belongs to the dethiobiotin synthetase family. Homodimer. Mg(2+) is required as a cofactor.

It is found in the cytoplasm. It catalyses the reaction (7R,8S)-7,8-diammoniononanoate + CO2 + ATP = (4R,5S)-dethiobiotin + ADP + phosphate + 3 H(+). Its pathway is cofactor biosynthesis; biotin biosynthesis; biotin from 7,8-diaminononanoate: step 1/2. Catalyzes a mechanistically unusual reaction, the ATP-dependent insertion of CO2 between the N7 and N8 nitrogen atoms of 7,8-diaminopelargonic acid (DAPA, also called 7,8-diammoniononanoate) to form a ureido ring. In Hydrogenobaculum sp. (strain Y04AAS1), this protein is ATP-dependent dethiobiotin synthetase BioD.